A 367-amino-acid polypeptide reads, in one-letter code: Quinolinate synthase (367 aa).

The iminosuccinate site is built by histidine 64 and serine 82. Residue cysteine 127 participates in [4Fe-4S] cluster binding. Residues 153–155 (YVN) and serine 170 each bind iminosuccinate. A [4Fe-4S] cluster-binding site is contributed by cysteine 216. Iminosuccinate-binding positions include 242-244 (HPE) and threonine 259. Cysteine 302 contacts [4Fe-4S] cluster.

The protein belongs to the quinolinate synthase family. Type 2 subfamily. Requires [4Fe-4S] cluster as cofactor.

It is found in the cytoplasm. It carries out the reaction iminosuccinate + dihydroxyacetone phosphate = quinolinate + phosphate + 2 H2O + H(+). It functions in the pathway cofactor biosynthesis; NAD(+) biosynthesis; quinolinate from iminoaspartate: step 1/1. In terms of biological role, catalyzes the condensation of iminoaspartate with dihydroxyacetone phosphate to form quinolinate. The chain is Quinolinate synthase from Caulobacter vibrioides (strain ATCC 19089 / CIP 103742 / CB 15) (Caulobacter crescentus).